The following is a 263-amino-acid chain: Glutamate racemase (263 aa).

Residues 13-14 and 45-46 each bind substrate; these read DS and YG. Catalysis depends on Cys77, which acts as the Proton donor/acceptor. Position 78 to 79 (78 to 79) interacts with substrate; it reads NT. Residue Cys185 is the Proton donor/acceptor of the active site. 186–187 contributes to the substrate binding site; it reads TH.

The protein belongs to the aspartate/glutamate racemases family.

It carries out the reaction L-glutamate = D-glutamate. The protein operates within cell wall biogenesis; peptidoglycan biosynthesis. In terms of biological role, provides the (R)-glutamate required for cell wall biosynthesis. In Vibrio vulnificus (strain YJ016), this protein is Glutamate racemase.